Reading from the N-terminus, the 239-residue chain is MEGLPCPCPALPHFWQLRSHLMAEGSRTQAPGKGPPLSIQFLRAQYEGLKRQQRTQAHLLVLPKGGNTPAPAESMVNAVWINKERRSSLSLEEADSEVEGRLEEAAQGCLQAPKSPWHTHLEMHCLVQTSPQDTSHQVHHRGKLVGSDQRLPPEGDTHLFETNQMTQQGTGIPEAAQLPCQVGNTQTKAVESGLKFSTQCPLSIKNPHRSGKPAYYPFPQRKTPRISQAARNLGLYGSA.

This is an uncharacterized protein from Homo sapiens (Human).